The chain runs to 105 residues: uncharacterized protein (105 aa).

Positions serine 31–valine 47 are enriched in low complexity. Positions serine 31–proline 80 are disordered. Residues isoleucine 54–alanine 66 are compositionally biased toward basic and acidic residues.

This is an uncharacterized protein from Caenorhabditis elegans.